Reading from the N-terminus, the 24-residue chain is Calreticulin (24 aa).

Belongs to the calreticulin family. In terms of assembly, monomer. Component of an EIF2 complex at least composed of CELF1/CUGBP1, CALR, CALR3, EIF2S1, EIF2S2, HSP90B1 and HSPA5. Interacts with PDIA3/ERp57 and SPACA9. Interacts with TRIM21. Interacts with NR3C1. Interacts with PPIB. Interacts (via P-domain) with PDIA5. Interacts with CLCC1. Pancreas.

The protein localises to the endoplasmic reticulum lumen. It localises to the cytoplasm. The protein resides in the cytosol. It is found in the cytolytic granule. Its subcellular location is the secreted. The protein localises to the extracellular space. It localises to the extracellular matrix. The protein resides in the cell surface. It is found in the sarcoplasmic reticulum lumen. Its subcellular location is the cytoplasmic vesicle. The protein localises to the secretory vesicle. It localises to the cortical granule. Calcium-binding chaperone that promotes folding, oligomeric assembly and quality control in the endoplasmic reticulum (ER) via the calreticulin/calnexin cycle. This lectin interacts transiently with almost all of the monoglucosylated glycoproteins that are synthesized in the ER. Interacts with the DNA-binding domain of NR3C1 and mediates its nuclear export. Involved in maternal gene expression regulation. May participate in oocyte maturation via the regulation of calcium homeostasis. Present in the cortical granules of non-activated oocytes, is exocytosed during the cortical reaction in response to oocyte activation and might participate in the block to polyspermy. The sequence is that of Calreticulin (CALR) from Canis lupus familiaris (Dog).